The chain runs to 185 residues: Ribosome-recycling factor (185 aa).

Residues 138–179 show a composition bias toward basic and acidic residues; sequence TLKRQEKNGDITEDEQRSLEKQVQKVTDDATKEIDKLADQKS. The interval 138 to 185 is disordered; the sequence is TLKRQEKNGDITEDEQRSLEKQVQKVTDDATKEIDKLADQKSQEITQG.

This sequence belongs to the RRF family.

It is found in the cytoplasm. In terms of biological role, responsible for the release of ribosomes from messenger RNA at the termination of protein biosynthesis. May increase the efficiency of translation by recycling ribosomes from one round of translation to another. The sequence is that of Ribosome-recycling factor from Lactobacillus gasseri (strain ATCC 33323 / DSM 20243 / BCRC 14619 / CIP 102991 / JCM 1131 / KCTC 3163 / NCIMB 11718 / NCTC 13722 / AM63).